Reading from the N-terminus, the 505-residue chain is ATP synthase subunit beta (505 aa).

Residue 158 to 165 (GGAGVGKT) participates in ATP binding.

Belongs to the ATPase alpha/beta chains family. F-type ATPases have 2 components, CF(1) - the catalytic core - and CF(0) - the membrane proton channel. CF(1) has five subunits: alpha(3), beta(3), gamma(1), delta(1), epsilon(1). CF(0) has three main subunits: a(1), b(2) and c(9-12). The alpha and beta chains form an alternating ring which encloses part of the gamma chain. CF(1) is attached to CF(0) by a central stalk formed by the gamma and epsilon chains, while a peripheral stalk is formed by the delta and b chains.

The protein localises to the cell inner membrane. It carries out the reaction ATP + H2O + 4 H(+)(in) = ADP + phosphate + 5 H(+)(out). Its function is as follows. Produces ATP from ADP in the presence of a proton gradient across the membrane. The catalytic sites are hosted primarily by the beta subunits. This is ATP synthase subunit beta from Parabacteroides distasonis (strain ATCC 8503 / DSM 20701 / CIP 104284 / JCM 5825 / NCTC 11152).